A 162-amino-acid polypeptide reads, in one-letter code: Shikimate kinase (162 aa).

11–16 lines the ATP pocket; that stretch reads GSGKSS. Serine 15 serves as a coordination point for Mg(2+). Substrate is bound by residues aspartate 33, arginine 57, and glycine 80. Arginine 116 is a binding site for ATP. Arginine 132 is a binding site for substrate.

Belongs to the shikimate kinase family. In terms of assembly, monomer. Requires Mg(2+) as cofactor.

It localises to the cytoplasm. It carries out the reaction shikimate + ATP = 3-phosphoshikimate + ADP + H(+). Its pathway is metabolic intermediate biosynthesis; chorismate biosynthesis; chorismate from D-erythrose 4-phosphate and phosphoenolpyruvate: step 5/7. In terms of biological role, catalyzes the specific phosphorylation of the 3-hydroxyl group of shikimic acid using ATP as a cosubstrate. The protein is Shikimate kinase of Helicobacter pylori (strain HPAG1).